The primary structure comprises 593 residues: NADH-quinone oxidoreductase subunit C/D (593 aa).

Residues 1–184 (MTADNAIFIP…DPYSLTLAKQ (184 aa)) form an NADH dehydrogenase I subunit C region. An NADH dehydrogenase I subunit D region spans residues 208–593 (DYMFLNLGPN…IDFVMADVDR (386 aa)).

The protein in the N-terminal section; belongs to the complex I 30 kDa subunit family. This sequence in the C-terminal section; belongs to the complex I 49 kDa subunit family. As to quaternary structure, NDH-1 is composed of 13 different subunits. Subunits NuoB, CD, E, F, and G constitute the peripheral sector of the complex.

It localises to the cell inner membrane. It carries out the reaction a quinone + NADH + 5 H(+)(in) = a quinol + NAD(+) + 4 H(+)(out). NDH-1 shuttles electrons from NADH, via FMN and iron-sulfur (Fe-S) centers, to quinones in the respiratory chain. The immediate electron acceptor for the enzyme in this species is believed to be ubiquinone. Couples the redox reaction to proton translocation (for every two electrons transferred, four hydrogen ions are translocated across the cytoplasmic membrane), and thus conserves the redox energy in a proton gradient. The sequence is that of NADH-quinone oxidoreductase subunit C/D from Pseudomonas putida (strain GB-1).